We begin with the raw amino-acid sequence, 183 residues long: Dual-action ribosomal maturation protein DarP (183 aa).

This sequence belongs to the DarP family.

It localises to the cytoplasm. In terms of biological role, member of a network of 50S ribosomal subunit biogenesis factors which assembles along the 30S-50S interface, preventing incorrect 23S rRNA structures from forming. Promotes peptidyl transferase center (PTC) maturation. The sequence is that of Dual-action ribosomal maturation protein DarP from Salmonella arizonae (strain ATCC BAA-731 / CDC346-86 / RSK2980).